The following is a 63-amino-acid chain: Cytochrome c oxidase subunit 7C, mitochondrial (63 aa).

The N-terminal 16 residues, methionine 1 to arginine 16, are a transit peptide targeting the mitochondrion. Topologically, residues serine 17–asparagine 33 are mitochondrial matrix. The residue at position 25 (lysine 25) is an N6-acetyllysine; alternate. Lysine 25 carries the N6-succinyllysine; alternate modification. The chain crosses the membrane as a helical span at residues lysine 34 to leucine 60. At leucine 61 to glutamine 63 the chain is on the mitochondrial intermembrane side.

Belongs to the cytochrome c oxidase VIIc family. As to quaternary structure, component of the cytochrome c oxidase (complex IV, CIV), a multisubunit enzyme composed of 14 subunits. The complex is composed of a catalytic core of 3 subunits MT-CO1, MT-CO2 and MT-CO3, encoded in the mitochondrial DNA, and 11 supernumerary subunits COX4I, COX5A, COX5B, COX6A, COX6B, COX6C, COX7A, COX7B, COX7C, COX8 and NDUFA4, which are encoded in the nuclear genome. The complex exists as a monomer or a dimer and forms supercomplexes (SCs) in the inner mitochondrial membrane with NADH-ubiquinone oxidoreductase (complex I, CI) and ubiquinol-cytochrome c oxidoreductase (cytochrome b-c1 complex, complex III, CIII), resulting in different assemblies (supercomplex SCI(1)III(2)IV(1) and megacomplex MCI(2)III(2)IV(2)). Interacts with RAB5IF.

Its subcellular location is the mitochondrion inner membrane. Its pathway is energy metabolism; oxidative phosphorylation. Its function is as follows. Component of the cytochrome c oxidase, the last enzyme in the mitochondrial electron transport chain which drives oxidative phosphorylation. The respiratory chain contains 3 multisubunit complexes succinate dehydrogenase (complex II, CII), ubiquinol-cytochrome c oxidoreductase (cytochrome b-c1 complex, complex III, CIII) and cytochrome c oxidase (complex IV, CIV), that cooperate to transfer electrons derived from NADH and succinate to molecular oxygen, creating an electrochemical gradient over the inner membrane that drives transmembrane transport and the ATP synthase. Cytochrome c oxidase is the component of the respiratory chain that catalyzes the reduction of oxygen to water. Electrons originating from reduced cytochrome c in the intermembrane space (IMS) are transferred via the dinuclear copper A center (CU(A)) of subunit 2 and heme A of subunit 1 to the active site in subunit 1, a binuclear center (BNC) formed by heme A3 and copper B (CU(B)). The BNC reduces molecular oxygen to 2 water molecules using 4 electrons from cytochrome c in the IMS and 4 protons from the mitochondrial matrix. The polypeptide is Cytochrome c oxidase subunit 7C, mitochondrial (COX7C) (Macaca fascicularis (Crab-eating macaque)).